Reading from the N-terminus, the 327-residue chain is MQQLTEIVEQALVIIDQASDLKALDDIRVDYLGKKGKITDMMKMMGSLSPEEKPAFGQAVNDAKQAIQQKLTERIDGLKSAELEAKLIAEKIDVTLPGRTIDIGGLHPVTRTIERIETFFGELGFSVKQGPEIEDDFHNFDALNISEHHPARADHDTFYFNPKLMLRTQTSGVQIRTMETEKPPLRIISPGRVYRNDYDQTHTPMFHQVEGLLVDENVNFAELKGVLHDFLRNFFEEDLQVRFRPSYFPFTEPSAEVDVMGKNGKWLEVLGCGMVHPNVLRSVGIDPEKYSGFAFGMGVERLTMLRYGVNDLRAFFENDLRFLKQFK.

Glu-252 lines the Mg(2+) pocket.

The protein belongs to the class-II aminoacyl-tRNA synthetase family. Phe-tRNA synthetase alpha subunit type 1 subfamily. Tetramer of two alpha and two beta subunits. Requires Mg(2+) as cofactor.

The protein localises to the cytoplasm. It catalyses the reaction tRNA(Phe) + L-phenylalanine + ATP = L-phenylalanyl-tRNA(Phe) + AMP + diphosphate + H(+). This chain is Phenylalanine--tRNA ligase alpha subunit, found in Shewanella sp. (strain MR-7).